A 130-amino-acid polypeptide reads, in one-letter code: Mating-type-like protein A1 (130 aa).

Positions 68 to 127 (TYTTRKPLPAKAKLQLVETFSKKRYLTRCEKHQLAVQCGITTNQVQIWFANRRKRSKDLN) form a DNA-binding region, homeobox.

Belongs to the MATA1 family.

The protein localises to the nucleus. In terms of biological role, mating type proteins are sequence specific DNA-binding proteins that act as master switches in yeast differentiation by controlling gene expression in a cell type-specific fashion. The polypeptide is Mating-type-like protein A1 (MTL1A1) (Candida glabrata (strain ATCC 2001 / BCRC 20586 / JCM 3761 / NBRC 0622 / NRRL Y-65 / CBS 138) (Yeast)).